A 276-amino-acid polypeptide reads, in one-letter code: Homeobox protein TOS8 (276 aa).

Residues Asn-176–Tyr-185 show a composition bias toward polar residues. The tract at residues Asn-176–Ser-199 is disordered. The segment covering Glu-189–Ser-199 has biased composition (basic residues). Residues Ala-194 to Gly-256 constitute a DNA-binding region (homeobox; TALE-type).

This sequence belongs to the TALE/CUP9 homeobox family.

It localises to the nucleus. The chain is Homeobox protein TOS8 (TOS8) from Saccharomyces cerevisiae (strain ATCC 204508 / S288c) (Baker's yeast).